A 296-amino-acid polypeptide reads, in one-letter code: MQDRFVRRINELPKALADELLPMLGEQFCGHLDAQQVKQLCAVSAMDSHELGLALLPIAAALAKPPVSNFYVGAIAVGSGGDFYMGANLELQGEALFHSVHAEQSAISHAWLSGETQISDIIVNASPCGHCRQFMNELVQGQAIRIHLPGQDTAPLSHYLPYAFGPADLNVTAPLLSKQQTELVLESDDPLLIEALDHAGLSYAPYSQCHAAVVLETEDGASFCGRYAENAAFNPSMLPMQMALSALVRHNRSFSDIKRAVLLESSQGKISLVGATMDALHAVAVVELEHLVVDPV.

CMP/dCMP-type deaminase domains follow at residues 47–167 and 186–296; these read DSHE…FGPA and ESDD…VDPV. Substrate is bound at residue 88–90; that stretch reads NLE. Residue His101 participates in Zn(2+) binding. Catalysis depends on Glu103, which acts as the Proton donor. Cys128 and Cys131 together coordinate Zn(2+).

Belongs to the cytidine and deoxycytidylate deaminase family. As to quaternary structure, homodimer. Zn(2+) serves as cofactor.

The catalysed reaction is cytidine + H2O + H(+) = uridine + NH4(+). It catalyses the reaction 2'-deoxycytidine + H2O + H(+) = 2'-deoxyuridine + NH4(+). Functionally, this enzyme scavenges exogenous and endogenous cytidine and 2'-deoxycytidine for UMP synthesis. The chain is Cytidine deaminase from Shewanella amazonensis (strain ATCC BAA-1098 / SB2B).